Consider the following 202-residue polypeptide: Holliday junction branch migration complex subunit RuvA (202 aa).

A domain I region spans residues 1–64 (MIDYVSGTLV…EDDESLYGFA (64 aa)). Residues 65–143 (TKAERTVFET…DLDVLEDTSP (79 aa)) form a domain II region. The segment at 144–149 (LSGGSD) is flexible linker. The segment at 150 to 202 (ARAEARADALEALTELGLSKADAERSIRQVLRDNAGIQSADELVRRALKADQE) is domain III.

Belongs to the RuvA family. As to quaternary structure, homotetramer. Forms an RuvA(8)-RuvB(12)-Holliday junction (HJ) complex. HJ DNA is sandwiched between 2 RuvA tetramers; dsDNA enters through RuvA and exits via RuvB. An RuvB hexamer assembles on each DNA strand where it exits the tetramer. Each RuvB hexamer is contacted by two RuvA subunits (via domain III) on 2 adjacent RuvB subunits; this complex drives branch migration. In the full resolvosome a probable DNA-RuvA(4)-RuvB(12)-RuvC(2) complex forms which resolves the HJ.

It is found in the cytoplasm. In terms of biological role, the RuvA-RuvB-RuvC complex processes Holliday junction (HJ) DNA during genetic recombination and DNA repair, while the RuvA-RuvB complex plays an important role in the rescue of blocked DNA replication forks via replication fork reversal (RFR). RuvA specifically binds to HJ cruciform DNA, conferring on it an open structure. The RuvB hexamer acts as an ATP-dependent pump, pulling dsDNA into and through the RuvAB complex. HJ branch migration allows RuvC to scan DNA until it finds its consensus sequence, where it cleaves and resolves the cruciform DNA. This chain is Holliday junction branch migration complex subunit RuvA, found in Salinibacter ruber (strain DSM 13855 / M31).